The primary structure comprises 92 residues: Protein RESPONSE TO LOW SULFUR 4 (92 aa).

Residues 8–63 (VMVAASEVEELRQKNGEMEKAVEEMRKEMLQLWRRTQVAEEAEEHLCSQLAELEAE) adopt a coiled-coil conformation.

Its function is as follows. Required for flower development in short-day conditions. This is Protein RESPONSE TO LOW SULFUR 4 from Arabidopsis thaliana (Mouse-ear cress).